Here is a 340-residue protein sequence, read N- to C-terminus: Dual specificity protein phosphatase 12 (340 aa).

Met-1 is modified (N-acetylmethionine). Residues Gln-26 to Glu-171 form the Tyrosine-protein phosphatase domain. Cys-115 (phosphocysteine intermediate) is an active-site residue. Position 116–121 (His-116–Arg-121) interacts with substrate. The residue at position 335 (Ser-335) is a Phosphoserine.

It belongs to the protein-tyrosine phosphatase family. Non-receptor class dual specificity subfamily. Monomer. Zn(2+) serves as cofactor. Ubiquitous, highest expression in spleen, testis, ovary, and peripheral blood leukocytes and lower expression in liver and lung.

It localises to the nucleus. The protein localises to the cytoplasm. The protein resides in the cytosol. It catalyses the reaction O-phospho-L-tyrosyl-[protein] + H2O = L-tyrosyl-[protein] + phosphate. The enzyme catalyses O-phospho-L-seryl-[protein] + H2O = L-seryl-[protein] + phosphate. The catalysed reaction is O-phospho-L-threonyl-[protein] + H2O = L-threonyl-[protein] + phosphate. Functionally, dual specificity phosphatase; can dephosphorylate both phosphotyrosine and phosphoserine or phosphothreonine residues. Can dephosphorylate glucokinase (in vitro). Has phosphatase activity with the synthetic substrate 6,8-difluoro-4-methylumbelliferyl phosphate and other in vitro substrates. The polypeptide is Dual specificity protein phosphatase 12 (DUSP12) (Homo sapiens (Human)).